The following is a 417-amino-acid chain: MLKREMNIADYDAELWQAMEQEKVRQEEHIELIASENYTSPRVMQAQGSQLTNKYAEGYPGKRYYGGCEYVDVVEQLAIDRAKELFGADYANVQPHSGSQANFAVYTALLQPGDTVLGMNLAQGGHLTHGSPVNFSGKLYNIVPYGIDESGKIDYEEMAKLAQTHKPKMIIGGFSAYSGVVDWAKMREIADSIGAYLFVDMAHVAGLIAADVYPNPVPHAHVVTTTTHKTLAGPRGGLILAKGGDEELYKKLNSAVFPSAQGGPLMHVIAGKAVALKEAMEPEFKVYQQQVAKNAKAMVEVFLNRGYKVVSGGTENHLFLLDLVDKNLTGKEADAALGRANITVNKNSVPNDPKSPFVTSGIRIGSPAITRRGFKEAEAKELAGWMCDVLDNINDEAVIERIKGKVLDICARFPVYA.

(6S)-5,6,7,8-tetrahydrofolate is bound by residues Leu-121 and 125 to 127 (GHL). Lys-229 carries the post-translational modification N6-(pyridoxal phosphate)lysine. (6S)-5,6,7,8-tetrahydrofolate is bound at residue 355–357 (SPF).

Belongs to the SHMT family. In terms of assembly, homodimer. Requires pyridoxal 5'-phosphate as cofactor.

It localises to the cytoplasm. It carries out the reaction (6R)-5,10-methylene-5,6,7,8-tetrahydrofolate + glycine + H2O = (6S)-5,6,7,8-tetrahydrofolate + L-serine. It functions in the pathway one-carbon metabolism; tetrahydrofolate interconversion. The protein operates within amino-acid biosynthesis; glycine biosynthesis; glycine from L-serine: step 1/1. Its function is as follows. Catalyzes the reversible interconversion of serine and glycine with tetrahydrofolate (THF) serving as the one-carbon carrier. This reaction serves as the major source of one-carbon groups required for the biosynthesis of purines, thymidylate, methionine, and other important biomolecules. Also exhibits THF-independent aldolase activity toward beta-hydroxyamino acids, producing glycine and aldehydes, via a retro-aldol mechanism. This chain is Serine hydroxymethyltransferase, found in Citrobacter koseri (strain ATCC BAA-895 / CDC 4225-83 / SGSC4696).